Consider the following 147-residue polypeptide: Phospholipase A2 SSD1043 (147 aa).

An N-terminal signal peptide occupies residues 1-22 (MSPKFMFFSIIAVWSCAAVTEA). Positions 23–28 (LFIQHR) are excised as a propeptide. Cystine bridges form between Cys55-Cys71, Cys70-Cys130, Cys77-Cys123, Cys86-Cys116, and Cys109-Cys121. Ca(2+) is bound by residues Gly56 and Gly58. His74 is an active-site residue. Position 75 (Asp75) interacts with Ca(2+). Asp124 is an active-site residue.

Ca(2+) serves as cofactor. In terms of tissue distribution, expressed by the venom gland.

The protein resides in the secreted. It catalyses the reaction a 1,2-diacyl-sn-glycero-3-phosphocholine + H2O = a 1-acyl-sn-glycero-3-phosphocholine + a fatty acid + H(+). PLA2 catalyzes the calcium-dependent hydrolysis of the 2-acyl groups in 3-sn-phosphoglycerides. This Scolopendra dehaani (Thai centipede) protein is Phospholipase A2 SSD1043.